The primary structure comprises 115 residues: SPbeta prophage-derived uncharacterized protein YoqS (115 aa).

This chain is SPbeta prophage-derived uncharacterized protein YoqS (yoqS), found in Bacillus subtilis (strain 168).